We begin with the raw amino-acid sequence, 527 residues long: Glutamate--cysteine ligase (527 aa).

Belongs to the glutamate--cysteine ligase type 1 family. Type 1 subfamily.

It catalyses the reaction L-cysteine + L-glutamate + ATP = gamma-L-glutamyl-L-cysteine + ADP + phosphate + H(+). It participates in sulfur metabolism; glutathione biosynthesis; glutathione from L-cysteine and L-glutamate: step 1/2. In Bordetella bronchiseptica (strain ATCC BAA-588 / NCTC 13252 / RB50) (Alcaligenes bronchisepticus), this protein is Glutamate--cysteine ligase.